The chain runs to 471 residues: Ribulose bisphosphate carboxylase large chain (471 aa).

Position 5 is an N6,N6,N6-trimethyllysine (Lys-5). Substrate is bound by residues Asn-114 and Thr-164. Residue Lys-166 is the Proton acceptor of the active site. Lys-168 is a binding site for substrate. Mg(2+)-binding residues include Lys-192, Asp-194, and Glu-195. An N6-carboxylysine modification is found at Lys-192. His-285 serves as the catalytic Proton acceptor. Substrate-binding residues include Arg-286, His-318, and Ser-370.

The protein belongs to the RuBisCO large chain family. Type I subfamily. As to quaternary structure, heterohexadecamer of 8 large chains and 8 small chains; disulfide-linked. The disulfide link is formed within the large subunit homodimers. Mg(2+) serves as cofactor. In terms of processing, the disulfide bond which can form in the large chain dimeric partners within the hexadecamer appears to be associated with oxidative stress and protein turnover.

The protein localises to the plastid. It is found in the chloroplast. The enzyme catalyses 2 (2R)-3-phosphoglycerate + 2 H(+) = D-ribulose 1,5-bisphosphate + CO2 + H2O. The catalysed reaction is D-ribulose 1,5-bisphosphate + O2 = 2-phosphoglycolate + (2R)-3-phosphoglycerate + 2 H(+). Functionally, ruBisCO catalyzes two reactions: the carboxylation of D-ribulose 1,5-bisphosphate, the primary event in carbon dioxide fixation, as well as the oxidative fragmentation of the pentose substrate in the photorespiration process. Both reactions occur simultaneously and in competition at the same active site. This chain is Ribulose bisphosphate carboxylase large chain, found in Anthocleista grandiflora (Forest fever tree).